Here is a 346-residue protein sequence, read N- to C-terminus: Porin Omp2a (346 aa).

A signal peptide spans 1 to 22; sequence MNIKSLLLGSAAALVAASGAQA.

It belongs to the alphaproteobacteria porin family. As to quaternary structure, monomer.

It is found in the cell outer membrane. Its function is as follows. Forms passive diffusion pores that allow small molecular weight hydrophilic materials across the outer membrane. This chain is Porin Omp2a (omp2a), found in Brucella ovis.